Consider the following 148-residue polypeptide: Large ribosomal subunit protein eL19 (148 aa).

Over residues 52-76 (KPKKGISSYRSKKIAQQKKKGRRRG) the composition is skewed to basic residues. The interval 52–95 (KPKKGISSYRSKKIAQQKKKGRRRGPGSIKGAKGARRPKKDEWM) is disordered.

The protein belongs to the eukaryotic ribosomal protein eL19 family. Part of the 50S ribosomal subunit.

Functionally, binds to the 23S rRNA. The protein is Large ribosomal subunit protein eL19 of Methanothermobacter thermautotrophicus (strain ATCC 29096 / DSM 1053 / JCM 10044 / NBRC 100330 / Delta H) (Methanobacterium thermoautotrophicum).